A 642-amino-acid polypeptide reads, in one-letter code: 1-deoxy-D-xylulose-5-phosphate synthase 2 (642 aa).

Thiamine diphosphate-binding positions include His73 and 113-115 (SHA). Asp144 contributes to the Mg(2+) binding site. Residues 145 to 146 (GA), Asn174, Tyr285, and Glu366 contribute to the thiamine diphosphate site. Residue Asn174 coordinates Mg(2+).

This sequence belongs to the transketolase family. DXPS subfamily. In terms of assembly, homodimer. Mg(2+) serves as cofactor. The cofactor is thiamine diphosphate.

The catalysed reaction is D-glyceraldehyde 3-phosphate + pyruvate + H(+) = 1-deoxy-D-xylulose 5-phosphate + CO2. It functions in the pathway metabolic intermediate biosynthesis; 1-deoxy-D-xylulose 5-phosphate biosynthesis; 1-deoxy-D-xylulose 5-phosphate from D-glyceraldehyde 3-phosphate and pyruvate: step 1/1. Its function is as follows. Catalyzes the acyloin condensation reaction between C atoms 2 and 3 of pyruvate and glyceraldehyde 3-phosphate to yield 1-deoxy-D-xylulose-5-phosphate (DXP). The protein is 1-deoxy-D-xylulose-5-phosphate synthase 2 of Streptomyces coelicolor (strain ATCC BAA-471 / A3(2) / M145).